Here is a 210-residue protein sequence, read N- to C-terminus: N-(5'-phosphoribosyl)anthranilate isomerase (210 aa).

This sequence belongs to the TrpF family.

It catalyses the reaction N-(5-phospho-beta-D-ribosyl)anthranilate = 1-(2-carboxyphenylamino)-1-deoxy-D-ribulose 5-phosphate. The protein operates within amino-acid biosynthesis; L-tryptophan biosynthesis; L-tryptophan from chorismate: step 3/5. This is N-(5'-phosphoribosyl)anthranilate isomerase from Pseudomonas fluorescens (strain SBW25).